The chain runs to 78 residues: Small ribosomal subunit protein bS18 (78 aa).

This sequence belongs to the bacterial ribosomal protein bS18 family. As to quaternary structure, part of the 30S ribosomal subunit. Forms a tight heterodimer with protein bS6.

Its function is as follows. Binds as a heterodimer with protein bS6 to the central domain of the 16S rRNA, where it helps stabilize the platform of the 30S subunit. In Clostridium novyi (strain NT), this protein is Small ribosomal subunit protein bS18.